A 31-amino-acid chain; its full sequence is Cytochrome b6-f complex subunit 6 (31 aa).

The chain crosses the membrane as a helical span at residues 4-26 (ITSYFGFLLAASTITPALLIGLS).

Belongs to the PetL family. As to quaternary structure, the 4 large subunits of the cytochrome b6-f complex are cytochrome b6, subunit IV (17 kDa polypeptide, PetD), cytochrome f and the Rieske protein, while the 4 small subunits are PetG, PetL, PetM and PetN. The complex functions as a dimer.

The protein localises to the plastid. The protein resides in the chloroplast thylakoid membrane. In terms of biological role, component of the cytochrome b6-f complex, which mediates electron transfer between photosystem II (PSII) and photosystem I (PSI), cyclic electron flow around PSI, and state transitions. PetL is important for photoautotrophic growth as well as for electron transfer efficiency and stability of the cytochrome b6-f complex. This chain is Cytochrome b6-f complex subunit 6, found in Liriodendron tulipifera (Tuliptree).